Consider the following 116-residue polypeptide: uncharacterized protein (116 aa).

The region spanning Leu6–Leu60 is the HTH cro/C1-type domain. Residues Gln17–Leu36 constitute a DNA-binding region (H-T-H motif).

This is an uncharacterized protein from Bacillus subtilis (strain 168).